Consider the following 374-residue polypeptide: Protein FAM199X (374 aa).

Residues 238–343 (YIREHSPRQR…QLKEQRQARK (106 aa)) form a disordered region. The span at 261 to 295 (SNGSTSGVSAHSSSNASMVSSTSSSTASTGSNSST) shows a compositional bias: low complexity. Basic residues predominate over residues 315–334 (DSKKRSKQRKMQQKALRKRQ). A coiled-coil region spans residues 317–346 (KKRSKQRKMQQKALRKRQLKEQRQARKERL).

This sequence belongs to the FAM199 family.

The chain is Protein FAM199X (fam199x) from Danio rerio (Zebrafish).